We begin with the raw amino-acid sequence, 98 residues long: Protein Vpr (98 aa).

The interval 1 to 42 is homooligomerization; that stretch reads MEQLPEDQGPQREPYNEWTLEILEELKREAVRHFPRDWLHQL. Residues Ser-79 and Ser-98 each carry the phosphoserine; by host modification.

This sequence belongs to the HIV-1 VPR protein family. As to quaternary structure, homooligomer, may form homodimer. Interacts with p6-gag region of the Pr55 Gag precursor protein through a (Leu-X-X)4 motif near the C-terminus of the P6gag protein. Interacts with host UNG. May interact with host RAD23A/HHR23A. Interacts with host VPRBP/DCAF1, leading to hijack the CUL4A-RBX1-DDB1-DCAF1/VPRBP complex, mediating ubiquitination of host proteins such as TERT and ZGPAT and arrest of the cell cycle in G2 phase. Phosphorylated on several residues by host. These phosphorylations regulate VPR activity for the nuclear import of the HIV-1 pre-integration complex.

The protein resides in the virion. The protein localises to the host nucleus. It localises to the host extracellular space. During virus replication, may deplete host UNG protein, and incude G2-M cell cycle arrest. Acts by targeting specific host proteins for degradation by the 26S proteasome, through association with the cellular CUL4A-DDB1 E3 ligase complex by direct interaction with host VPRPB/DCAF-1. Cell cycle arrest reportedly occurs within hours of infection and is not blocked by antiviral agents, suggesting that it is initiated by the VPR carried into the virion. Additionally, VPR induces apoptosis in a cell cycle dependent manner suggesting that these two effects are mechanistically linked. Detected in the serum and cerebrospinal fluid of AIDS patient, VPR may also induce cell death to bystander cells. In terms of biological role, during virus entry, plays a role in the transport of the viral pre-integration (PIC) complex to the host nucleus. This function is crucial for viral infection of non-dividing macrophages. May act directly at the nuclear pore complex, by binding nucleoporins phenylalanine-glycine (FG)-repeat regions. The protein is Protein Vpr of Pan troglodytes (Chimpanzee).